Here is a 213-residue protein sequence, read N- to C-terminus: Riboflavin synthase (213 aa).

Lumazine-binding repeat units follow at residues 1 to 97 and 98 to 195; these read MFTG…IGGH and LMSG…VDTV. Residues 4–6, 48–50, 62–67, 101–103, Lys137, 146–148, and 160–165 each bind 2,4-dihydroxypteridine; these read GIV, CLT, DLMKET, GHI, SLT, and HLIPET.

In terms of assembly, homotrimer. Unlike in B.subtilis, does not interact with 6,7-dimethyl-8-ribityllumazine synthase.

It carries out the reaction 2 6,7-dimethyl-8-(1-D-ribityl)lumazine + H(+) = 5-amino-6-(D-ribitylamino)uracil + riboflavin. It functions in the pathway cofactor biosynthesis; riboflavin biosynthesis; riboflavin from 2-hydroxy-3-oxobutyl phosphate and 5-amino-6-(D-ribitylamino)uracil: step 2/2. In terms of biological role, catalyzes the dismutation of two molecules of 6,7-dimethyl-8-ribityllumazine, resulting in the formation of riboflavin and 5-amino-6-(D-ribitylamino)uracil. In Escherichia coli (strain K12), this protein is Riboflavin synthase (ribC).